The sequence spans 714 residues: DNA ligase (714 aa).

Residues 40–44 (DADYD), 90–91 (SL), and Glu124 each bind NAD(+). Lys126 acts as the N6-AMP-lysine intermediate in catalysis. The NAD(+) site is built by Arg147, Glu183, Lys304, and Lys328. Residues Cys420, Cys423, Cys438, and Cys444 each coordinate Zn(2+). Positions 634-714 (TRDSEVSGKT…EWAAIVAAAG (81 aa)) constitute a BRCT domain.

It belongs to the NAD-dependent DNA ligase family. LigA subfamily. Requires Mg(2+) as cofactor. Mn(2+) is required as a cofactor.

It catalyses the reaction NAD(+) + (deoxyribonucleotide)n-3'-hydroxyl + 5'-phospho-(deoxyribonucleotide)m = (deoxyribonucleotide)n+m + AMP + beta-nicotinamide D-nucleotide.. Its function is as follows. DNA ligase that catalyzes the formation of phosphodiester linkages between 5'-phosphoryl and 3'-hydroxyl groups in double-stranded DNA using NAD as a coenzyme and as the energy source for the reaction. It is essential for DNA replication and repair of damaged DNA. In Sphingopyxis alaskensis (strain DSM 13593 / LMG 18877 / RB2256) (Sphingomonas alaskensis), this protein is DNA ligase.